The sequence spans 418 residues: Diacylglycerol O-acyltransferase 1 (418 aa).

Residues 1 to 30 form a disordered region; it reads MSGTFNDIRRRKKEEGSPTAGITERHENKS. Residues 1-71 lie on the Cytoplasmic side of the membrane; sequence MSGTFNDIRR…LAVAWHTSSF (71 aa). Residue serine 17 is modified to Phosphoserine. Residues 72–92 form a helical membrane-spanning segment; that stretch reads VLFSIFTLFAISTPALWVLAI. Residues 93–186 lie on the Lumenal side of the membrane; the sequence is PYMIYFFFDR…DYRNQECTGP (94 aa). A glycan (N-linked (GlcNAc...) asparagine) is linked at asparagine 173. A helical transmembrane segment spans residues 187-207; the sequence is TYLFGYHPHGIGALGAFGAFA. Residues 208-215 lie on the Cytoplasmic side of the membrane; it reads TEGCNYSK. A helical membrane pass occupies residues 216–236; the sequence is IFPGIPISLMTLVTQFHIPLY. Topologically, residues 237–289 are lumenal; the sequence is RDYLLALGISSVSRKNALRTLSKNQSICIVVGGARESLLSSTNGTQLILNKRK. 2 N-linked (GlcNAc...) asparagine glycosylation sites follow: asparagine 260 and asparagine 279. The chain crosses the membrane as a helical span at residues 290-310; sequence GFIKLAIQTGNINLVPVFAFG. At 311–418 the chain is on the cytoplasmic side; that stretch reads EVDCYNVLST…VPDAELKIVG (108 aa).

The protein belongs to the diacylglycerol acyltransferase family.

It is found in the lipid droplet. It localises to the endoplasmic reticulum membrane. The catalysed reaction is an acyl-CoA + a 1,2-diacyl-sn-glycerol = a triacyl-sn-glycerol + CoA. It catalyses the reaction a 2-acylglycerol + an acyl-CoA = a 1,2-diacylglycerol + CoA. The enzyme catalyses 2-(9Z-octadecenoyl)-glycerol + (9Z)-octadecenoyl-CoA = 1,2-di-(9Z-octadecenoyl)-glycerol + CoA. It participates in glycerolipid metabolism; triacylglycerol biosynthesis. Functionally, catalyzes the terminal and only committed step in triacylglycerol (TAG) synthesis by using diacylglycerol (DAG) and fatty acyl-CoA as substrates. Required for storage lipid synthesis. Major DAG esterifying enzyme in stationary phase when TAG production is particularly active. Involved in lipid particle synthesis from the endoplasmic reticulum, promoting localized TAG production at discrete ER subdomains, and in ergosterol biosynthesis. Also has monoacylglycerol acyltransferase (MGAT) activity, catalyzing the acyl-CoA-dependent esterification of monoacylglycerol to diacylglycerol. Can also utilize ceramide instead of DAG, acylating the ceramides by attaching a fatty acid to the hydroxy group on the first carbon atom of the long-chain base to produce 1-O-acylceramides. The chain is Diacylglycerol O-acyltransferase 1 (DGA1) from Saccharomyces cerevisiae (strain ATCC 204508 / S288c) (Baker's yeast).